The sequence spans 360 residues: COP9 signalosome complex subunit 5 (360 aa).

One can recognise an MPN domain in the interval 60 to 197; it reads AKISALALLK…IGAFRTYPKD (138 aa). Residues histidine 143, histidine 145, and aspartate 156 each coordinate Zn(2+). Positions 143 to 156 match the JAMM motif motif; that stretch reads HSHPGYGCWLSGID. 2 disordered regions span residues 293-315 and 341-360; these read LMPS…RDSS and SNKA…MVEA. Positions 341-350 are enriched in polar residues; the sequence is SNKASTSAPD.

Belongs to the peptidase M67A family. CSN5 subfamily. In terms of assembly, component of the CSN complex, probably composed of CSN1, CSN2, CSN3, CSN4, CSN5, CSN6, CSN7 and CSN8. Interacts with MCM2.

Probable protease subunit of the COP9 signalosome complex (CSN), a complex involved in various cellular and developmental processes such as photomorphogenesis and response to hormones. The CSN complex is an essential regulator of the ubiquitin (Ubl) conjugation pathway by mediating the deneddylation of the cullin subunits of SCF-type E3 ligase complexes, leading to decrease the Ubl ligase activity of SCF. Involved in early response to iron deficiency. This is COP9 signalosome complex subunit 5 from Oryza sativa subsp. japonica (Rice).